The primary structure comprises 216 residues: Adenylate kinase (216 aa).

10 to 15 lines the ATP pocket; it reads GAGKGT. Positions 30 to 59 are NMP; sequence STGDMIRETIKSDSEIGKELKKVLDAGQLV. AMP is bound by residues T31, R36, 57–59, and Q92; that span reads QLV. Residues 122-159 are LID; that stretch reads GRRVHPASGRTYHTKFNPPKVEGKDDITGEDLITRTDD. ATP-binding positions include R123 and 132-133; that span reads TY. AMP-binding residues include R156 and R167. Q202 contacts ATP.

The protein belongs to the adenylate kinase family. As to quaternary structure, monomer.

The protein localises to the cytoplasm. The enzyme catalyses AMP + ATP = 2 ADP. Its pathway is purine metabolism; AMP biosynthesis via salvage pathway; AMP from ADP: step 1/1. Its function is as follows. Catalyzes the reversible transfer of the terminal phosphate group between ATP and AMP. Plays an important role in cellular energy homeostasis and in adenine nucleotide metabolism. The sequence is that of Adenylate kinase from Francisella philomiragia subsp. philomiragia (strain ATCC 25017 / CCUG 19701 / FSC 153 / O#319-036).